We begin with the raw amino-acid sequence, 92 residues long: Small ribosomal subunit protein uS19c (92 aa).

The protein belongs to the universal ribosomal protein uS19 family.

The protein resides in the plastid. It is found in the chloroplast. Protein S19 forms a complex with S13 that binds strongly to the 16S ribosomal RNA. The polypeptide is Small ribosomal subunit protein uS19c (Pinus koraiensis (Korean pine)).